We begin with the raw amino-acid sequence, 528 residues long: MIELRNFSYTYGTAAIPALKNINLEIRKGELLLVTGHSAAGKTTLALAMAGILHHEIGGKIEGNISFQSRDVKEFDGIKELSRHIGVVFDDAESQLIFTTVEEEIFSGLENRGHPEKEMVRRSKEAMDFCAISHLNNRAPHMLSGGQKQKVALAATLALDTEVLILDEATAELDSQAVRKVFSVLKRLKDAGKTIIIIDHNIEDFLEIGDRVVLLEKGEIKAIKSPSEFTSKSSDLTSTNLTSTSALQTDLPLSRTAEQPIISVKNLTQRYGEILALDNIDLEIYPGELVAILGENGSGKTTLVKHFNGLLRPYSGKVTVKGLETSTTPINELVKHTGLVFQNPDNMLFEDTVEAEINFGLNNIGVKGPEAVGAILRSLELVNLNDKQKVFPRHLSRGERQRLAVACIIAMKPELIVLDEPTTGLDAEESDRMMQLMRKLQQEGHTIVMVTHNLQIVRDHVERVIRMESGKVVEDSANRKFSGKGSVKEESDYKGHVSKEIVSEEIVSEEIVSEESVSEECVRGGTCA.

2 consecutive ABC transporter domains span residues 2–242 and 262–494; these read IELR…TNLT and ISVK…SDYK. ATP contacts are provided by residues 36–43 and 294–301; these read GHSAAGKT and GENGSGKT.

Belongs to the ABC transporter superfamily.

The protein localises to the cell membrane. Functionally, probably part of an ABC transporter complex. Responsible for energy coupling to the transport system. This chain is Putative ABC transporter ATP-binding protein MA_1418, found in Methanosarcina acetivorans (strain ATCC 35395 / DSM 2834 / JCM 12185 / C2A).